Reading from the N-terminus, the 122-residue chain is Large ribosomal subunit protein uL14 (122 aa).

This sequence belongs to the universal ribosomal protein uL14 family. As to quaternary structure, part of the 50S ribosomal subunit. Forms a cluster with proteins L3 and L19. In the 70S ribosome, L14 and L19 interact and together make contacts with the 16S rRNA in bridges B5 and B8.

Binds to 23S rRNA. Forms part of two intersubunit bridges in the 70S ribosome. The polypeptide is Large ribosomal subunit protein uL14 (Lactobacillus delbrueckii subsp. bulgaricus (strain ATCC BAA-365 / Lb-18)).